Consider the following 292-residue polypeptide: Protein/nucleic acid deglycase HchA (292 aa).

Residues 1 to 12 (MSQDVNELSKQP) show a composition bias toward polar residues. Positions 1–23 (MSQDVNELSKQPTPDKAEDNAFF) are disordered. Residue C190 is the Nucleophile of the active site.

Belongs to the peptidase C56 family. HchA subfamily.

Its subcellular location is the cytoplasm. The enzyme catalyses N(omega)-(1-hydroxy-2-oxopropyl)-L-arginyl-[protein] + H2O = lactate + L-arginyl-[protein] + H(+). It carries out the reaction N(6)-(1-hydroxy-2-oxopropyl)-L-lysyl-[protein] + H2O = lactate + L-lysyl-[protein] + H(+). It catalyses the reaction S-(1-hydroxy-2-oxopropyl)-L-cysteinyl-[protein] + H2O = lactate + L-cysteinyl-[protein] + H(+). The catalysed reaction is N(omega)-(1-hydroxy-2-oxoethyl)-L-arginyl-[protein] + H2O = L-arginyl-[protein] + glycolate + H(+). The enzyme catalyses N(6)-(1-hydroxy-2-oxoethyl)-L-lysyl-[protein] + H2O = glycolate + L-lysyl-[protein] + H(+). It carries out the reaction S-(1-hydroxy-2-oxoethyl)-L-cysteinyl-[protein] + H2O = glycolate + L-cysteinyl-[protein] + H(+). It catalyses the reaction N(2)-(1-hydroxy-2-oxopropyl)-dGTP + H2O = lactate + dGTP + H(+). The catalysed reaction is N(2)-(1-hydroxy-2-oxopropyl)-GTP + H2O = lactate + GTP + H(+). The enzyme catalyses N(2)-(1-hydroxy-2-oxopropyl)-GDP + H2O = lactate + GDP + H(+). It carries out the reaction N(2)-(1-hydroxy-2-oxopropyl)-GMP + H2O = lactate + GMP + H(+). It catalyses the reaction N(2)-(1-hydroxy-2-oxoethyl)-dGTP + H2O = dGTP + glycolate + H(+). The catalysed reaction is N(2)-(1-hydroxy-2-oxoethyl)-GTP + H2O = glycolate + GTP + H(+). The enzyme catalyses N(2)-(1-hydroxy-2-oxoethyl)-GDP + H2O = glycolate + GDP + H(+). It carries out the reaction N(2)-(1-hydroxy-2-oxoethyl)-GMP + H2O = glycolate + GMP + H(+). It catalyses the reaction an N(2)-(1-hydroxy-2-oxopropyl)-guanosine in RNA + H2O = a guanosine in RNA + lactate + H(+). The catalysed reaction is an N(2)-(1-hydroxy-2-oxopropyl)-2'-deoxyguanosine in DNA + H2O = a 2'-deoxyguanosine in DNA + lactate + H(+). The enzyme catalyses an N(2)-(1-hydroxy-2-oxoethyl)-guanosine in RNA + H2O = a guanosine in RNA + glycolate + H(+). It carries out the reaction an N(2)-(1-hydroxy-2-oxoethyl)-2'-deoxyguanosine in DNA + H2O = a 2'-deoxyguanosine in DNA + glycolate + H(+). In terms of biological role, protein and nucleotide deglycase that catalyzes the deglycation of the Maillard adducts formed between amino groups of proteins or nucleotides and reactive carbonyl groups of glyoxals. Thus, functions as a protein deglycase that repairs methylglyoxal- and glyoxal-glycated proteins, and releases repaired proteins and lactate or glycolate, respectively. Deglycates cysteine, arginine and lysine residues in proteins, and thus reactivates these proteins by reversing glycation by glyoxals. Acts on early glycation intermediates (hemithioacetals and aminocarbinols), preventing the formation of Schiff bases and advanced glycation endproducts (AGE). Also functions as a nucleotide deglycase able to repair glycated guanine in the free nucleotide pool (GTP, GDP, GMP, dGTP) and in DNA and RNA. Is thus involved in a major nucleotide repair system named guanine glycation repair (GG repair), dedicated to reversing methylglyoxal and glyoxal damage via nucleotide sanitization and direct nucleic acid repair. Plays an important role in protecting cells from carbonyl stress. In Staphylococcus aureus (strain Newman), this protein is Protein/nucleic acid deglycase HchA.